Here is a 173-residue protein sequence, read N- to C-terminus: Protein tyrosine phosphatase type IVA 1 (173 aa).

The region spanning 8–161 is the Tyrosine-protein phosphatase domain; that stretch reads APVEVTYKNM…YRPKMRLRFK (154 aa). Cysteine 49 and cysteine 104 are joined by a disulfide. Aspartate 72 (proton donor) is an active-site residue. The interaction with ATF5 stretch occupies residues 97–132; sequence GCCIAVHCVAGLGRAPVLVALALIEGGMKYEDAVQF. Cysteine 104 (phosphocysteine intermediate) is an active-site residue. Phosphate is bound at residue 105-110; the sequence is VAGLGR. Arginine 110 is a binding site for substrate. Cysteine methyl ester is present on cysteine 170. Residue cysteine 170 is the site of S-farnesyl cysteine attachment. The propeptide at 171–173 is removed in mature form; that stretch reads CIQ.

Belongs to the protein-tyrosine phosphatase family. As to quaternary structure, homotrimer. Interacts with ATF5 and tubulin. Post-translationally, farnesylated. Farnesylation is required for membrane targeting.

Its subcellular location is the cell membrane. It localises to the early endosome. The protein resides in the endoplasmic reticulum. It is found in the cytoplasm. The protein localises to the cytoskeleton. Its subcellular location is the spindle. It localises to the nucleus. The catalysed reaction is O-phospho-L-tyrosyl-[protein] + H2O = L-tyrosyl-[protein] + phosphate. Inhibited by sodium orthovanadate and pentamidine. Its function is as follows. Protein tyrosine phosphatase which stimulates progression from G1 into S phase during mitosis. May play a role in the development and maintenance of differentiating epithelial tissues. In Pongo abelii (Sumatran orangutan), this protein is Protein tyrosine phosphatase type IVA 1 (PTP4A1).